Consider the following 461-residue polypeptide: D-phenylhydantoinase (461 aa).

Positions 59, 61, and 151 each coordinate a divalent metal cation. Lysine 151 is modified (N6-carboxylysine). Tyrosine 156 lines the substrate pocket. A divalent metal cation contacts are provided by histidine 182 and histidine 239. Serine 286 serves as a coordination point for substrate. Position 313 (aspartate 313) interacts with a divalent metal cation. Residue asparagine 335 participates in substrate binding.

Belongs to the metallo-dependent hydrolases superfamily. Hydantoinase/dihydropyrimidinase family. As to quaternary structure, homotetramer. A divalent metal cation is required as a cofactor. Post-translationally, carboxylation allows a single lysine to coordinate two divalent metal cations.

It catalyses the reaction D-5-phenylhydantoin + H2O = N-carbamoyl-D-phenylglycine + H(+). In terms of biological role, catalyzes the stereospecific hydrolysis of the cyclic amide bond of D-hydantoin derivatives with an aromatic side chains at the 5'-position. Has no activity on dihydropyrimidines. The physiological function is unknown. The polypeptide is D-phenylhydantoinase (Escherichia coli O81 (strain ED1a)).